The primary structure comprises 25 residues: Unknown protein 4 (25 aa).

The segment covering Ile-1–Lys-10 has biased composition (basic and acidic residues). The interval Ile-1–Lys-25 is disordered. Positions Ala-16–Lys-25 are enriched in polar residues.

The sequence is that of Unknown protein 4 from Lonomia obliqua (Moth).